Consider the following 61-residue polypeptide: Large ribosomal subunit protein uL30 (61 aa).

This sequence belongs to the universal ribosomal protein uL30 family. In terms of assembly, part of the 50S ribosomal subunit.

The chain is Large ribosomal subunit protein uL30 from Laribacter hongkongensis (strain HLHK9).